The primary structure comprises 106 residues: Toxin-like structure LSTX-D4 (106 aa).

A signal peptide spans 1-20 (MMKVLVVVALLVTLISYSSS). A propeptide spanning residues 21-41 (EGIGDLEADELLSLMANEQTR) is cleaved from the precursor. 4 disulfide bridges follow: Cys45–Cys60, Cys52–Cys69, Cys59–Cys85, and Cys71–Cys83.

The protein belongs to the neurotoxin 19 (CSTX) family. 02 (D7) subfamily. In terms of tissue distribution, expressed by the venom gland.

Its subcellular location is the secreted. In Lycosa singoriensis (Wolf spider), this protein is Toxin-like structure LSTX-D4.